The following is a 118-amino-acid chain: Ribonuclease P protein component (118 aa).

This sequence belongs to the RnpA family. As to quaternary structure, consists of a catalytic RNA component (M1 or rnpB) and a protein subunit.

The catalysed reaction is Endonucleolytic cleavage of RNA, removing 5'-extranucleotides from tRNA precursor.. Functionally, RNaseP catalyzes the removal of the 5'-leader sequence from pre-tRNA to produce the mature 5'-terminus. It can also cleave other RNA substrates such as 4.5S RNA. The protein component plays an auxiliary but essential role in vivo by binding to the 5'-leader sequence and broadening the substrate specificity of the ribozyme. The chain is Ribonuclease P protein component from Rickettsia peacockii (strain Rustic).